The primary structure comprises 263 residues: Endonuclease 8 (263 aa).

The Schiff-base intermediate with DNA role is filled by Pro-2. Glu-3 acts as the Proton donor in catalysis. Residue Lys-53 is the Proton donor; for beta-elimination activity of the active site. DNA-binding residues include Gln-70, Arg-125, and Asn-169. The FPG-type zinc finger occupies 229 to 263 (KVFHRDGELCERCGGIIEKTTLSSRPFYWCPGCQH). Arg-253 functions as the Proton donor; for delta-elimination activity in the catalytic mechanism.

Belongs to the FPG family. Zn(2+) serves as cofactor.

The catalysed reaction is 2'-deoxyribonucleotide-(2'-deoxyribose 5'-phosphate)-2'-deoxyribonucleotide-DNA = a 3'-end 2'-deoxyribonucleotide-(2,3-dehydro-2,3-deoxyribose 5'-phosphate)-DNA + a 5'-end 5'-phospho-2'-deoxyribonucleoside-DNA + H(+). Functionally, involved in base excision repair of DNA damaged by oxidation or by mutagenic agents. Acts as a DNA glycosylase that recognizes and removes damaged bases. Has a preference for oxidized pyrimidines, such as thymine glycol, 5,6-dihydrouracil and 5,6-dihydrothymine. Has AP (apurinic/apyrimidinic) lyase activity and introduces nicks in the DNA strand. Cleaves the DNA backbone by beta-delta elimination to generate a single-strand break at the site of the removed base with both 3'- and 5'-phosphates. In Escherichia coli (strain SE11), this protein is Endonuclease 8.